The following is a 313-amino-acid chain: Aspartate carbamoyltransferase catalytic subunit (313 aa).

Carbamoyl phosphate-binding residues include arginine 58 and threonine 59. Position 86 (lysine 86) interacts with L-aspartate. Arginine 108, histidine 136, and glutamine 139 together coordinate carbamoyl phosphate. The L-aspartate site is built by arginine 169 and arginine 223. Positions 264 and 265 each coordinate carbamoyl phosphate.

This sequence belongs to the aspartate/ornithine carbamoyltransferase superfamily. ATCase family. As to quaternary structure, heterododecamer (2C3:3R2) of six catalytic PyrB chains organized as two trimers (C3), and six regulatory PyrI chains organized as three dimers (R2).

It catalyses the reaction carbamoyl phosphate + L-aspartate = N-carbamoyl-L-aspartate + phosphate + H(+). It functions in the pathway pyrimidine metabolism; UMP biosynthesis via de novo pathway; (S)-dihydroorotate from bicarbonate: step 2/3. Catalyzes the condensation of carbamoyl phosphate and aspartate to form carbamoyl aspartate and inorganic phosphate, the committed step in the de novo pyrimidine nucleotide biosynthesis pathway. This Chlorobium luteolum (strain DSM 273 / BCRC 81028 / 2530) (Pelodictyon luteolum) protein is Aspartate carbamoyltransferase catalytic subunit.